Here is an 84-residue protein sequence, read N- to C-terminus: Small ribosomal subunit protein bS16 (84 aa).

This sequence belongs to the bacterial ribosomal protein bS16 family.

The sequence is that of Small ribosomal subunit protein bS16 from Dichelobacter nodosus (strain VCS1703A).